Here is a 1493-residue protein sequence, read N- to C-terminus: Myosin-13 (1493 aa).

Residues 18–67 (KVGSIVWVQDPEEAWIDGEVVEVNGEDIKVQCTSGKTVVAKGSNTYPKDM) enclose the Myosin N-terminal SH3-like domain. A Myosin motor domain is found at 72-741 (SGVDDMTTLA…QMAELDDRRT (670 aa)). ATP-binding positions include 166–173 (GESGAGKT) and 219–227 (NNNSSRFGK). 4 actin-binding regions span residues 504 to 538 (LIEKKRGGIIALLDEACMFPRSTHKTFSQKLYETL), 540 to 563 (DNKYFSKPKLSRTDFTICHYAGDV), 598 to 622 (FPPLVEDANKQSKFSSIASQFKQQL), and 622 to 644 (LASLIEGLNTTEPHYIRCVKPNN). IQ domains are found at residues 744–773 (LGRAACIIQWKFRSYLTRQSFIMLRNAAIN), 767–796 (LRNAAINIQAVYRGQVARYRFENLRREAAA), 792–821 (REAAALKIQRALRIHLDRKRSYIEAVVTVQ), 813–842 (YIEAVVTVQSGLRGMAARVVLRRKTKATTV), 836–865 (KTKATTVIQSHCRRLRAELHYKKLKKAAIT), and 859–888 (LKKAAITTQSAWRARLARKELRKLKTDARD). The stretch at 889 to 1057 (TVVLQAAKSM…NFLKESVLTT (169 aa)) forms a coiled coil. The disordered stretch occupies residues 1085–1114 (QLSGAEFTTPPRIQESGSDTKSRGSHIDPQ). The segment covering 1102 to 1114 (SDTKSRGSHIDPQ) has biased composition (basic and acidic residues). A Dilute domain is found at 1161–1444 (DRLVQMIGSA…IASMTGVMTD (284 aa)).

The protein belongs to the TRAFAC class myosin-kinesin ATPase superfamily. Myosin family. Plant myosin class XI subfamily. In terms of assembly, homodimer.

Its function is as follows. Myosin heavy chain that is required for the cell cycle-regulated transport of various organelles and proteins for their segregation. Functions by binding with its tail domain to receptor proteins on organelles and exerting force with its N-terminal motor domain against actin filaments, thereby transporting its cargo along polarized actin cables. The protein is Myosin-13 (XI-G) of Arabidopsis thaliana (Mouse-ear cress).